The primary structure comprises 403 residues: Nodal homolog (403 aa).

Positions 1–18 (MAFLTAVLCFGFACMVQG) are cleaved as a signal peptide. A propeptide spanning residues 19–278 (VPSWLESRIP…RMPGIRRHRR (260 aa)) is cleaved from the precursor. 3 N-linked (GlcNAc...) asparagine glycosylation sites follow: N68, N133, and N169. Positions 195-220 (AERGSGMSSAEFLDSPGDSPQYNPHH) are disordered. Disulfide bonds link C303-C369, C332-C400, and C336-C402. N-linked (GlcNAc...) asparagine glycosylation occurs at N341.

Belongs to the TGF-beta family. As to quaternary structure, homodimer; disulfide-linked. Interacts with, and is inhibited by cer1 and gdf10/bmp3b.

The protein resides in the secreted. Functionally, cooperation and regulatory loops of multiple nodals are essential for mesendoderm patterning in early embryos. Essential for mesoderm formation and axial patterning during embryonic development. Activates the activin-like signaling pathway to induce dorsal and ventral mesoderm in animal cap ectoderm. In addition, also dorsalizes ventral marginal zone (VMZ) tissues during gastrulation. Acts in a downstream signaling cascade via cripto and cer1 to mediate cardiogenesis in embryonic mesoderm. Directs the orientation of the left-right axis by driving the left-specific gene cascade in the left lateral plate mesoderm. The sequence is that of Nodal homolog from Xenopus tropicalis (Western clawed frog).